Reading from the N-terminus, the 1297-residue chain is Cingulin-like protein 1 (1297 aa).

Residues Met1 to Thr550 are head. Residues Ala37–Gly51 carry the ZIM motif. A phosphoserine mark is found at Ser113, Ser203, and Ser257. Disordered regions lie at residues Asn161 to Asp208, Gly245 to Ser306, Lys364 to Phe396, and Gln428 to Val467. Positions Tyr197–Ser206 are enriched in polar residues. Residues Glu268–Asp283 show a composition bias toward basic and acidic residues. Phosphoserine occurs at positions 284, 298, and 299. The segment covering Ser297 to Ser306 has biased composition (low complexity). The span at Leu367–Arg378 shows a compositional bias: basic residues. Over residues Ile379–Ser389 the composition is skewed to basic and acidic residues. 2 positions are modified to phosphoserine: Ser389 and Ser392. Position 482 is a phosphoserine (Ser482). The tract at residues Ser586–Leu608 is disordered. Over residues Ala592–Leu608 the composition is skewed to polar residues. Positions Glu604 to Lys1251 form a coiled coil. A phosphoserine mark is found at Ser678 and Ser704. Residues Ser1259–Ile1297 form a tail region.

This sequence belongs to the cingulin family. Homodimer or oligomer. Interacts with CD2AP and SH3BP1; probably part of a complex at cell junctions. Widely expressed. Highly expressed in the kidney and lung.

It localises to the cell junction. The protein resides in the tight junction. In terms of biological role, may be involved in anchoring the apical junctional complex, especially tight junctions, to actin-based cytoskeletons. The sequence is that of Cingulin-like protein 1 from Mus musculus (Mouse).